Reading from the N-terminus, the 157-residue chain is SsrA-binding protein (157 aa).

The tract at residues 132 to 157 is disordered; the sequence is KLHDKRETEKKRDWSREKGRLLRSRG. Residues 135–151 are compositionally biased toward basic and acidic residues; that stretch reads DKRETEKKRDWSREKGR.

The protein belongs to the SmpB family.

It localises to the cytoplasm. Required for rescue of stalled ribosomes mediated by trans-translation. Binds to transfer-messenger RNA (tmRNA), required for stable association of tmRNA with ribosomes. tmRNA and SmpB together mimic tRNA shape, replacing the anticodon stem-loop with SmpB. tmRNA is encoded by the ssrA gene; the 2 termini fold to resemble tRNA(Ala) and it encodes a 'tag peptide', a short internal open reading frame. During trans-translation Ala-aminoacylated tmRNA acts like a tRNA, entering the A-site of stalled ribosomes, displacing the stalled mRNA. The ribosome then switches to translate the ORF on the tmRNA; the nascent peptide is terminated with the 'tag peptide' encoded by the tmRNA and targeted for degradation. The ribosome is freed to recommence translation, which seems to be the essential function of trans-translation. In Rhodopseudomonas palustris (strain ATCC BAA-98 / CGA009), this protein is SsrA-binding protein.